Here is a 669-residue protein sequence, read N- to C-terminus: Alpha-1,6-mannosylglycoprotein 6-beta-N-acetylglucosaminyltransferase (669 aa).

The Cytoplasmic portion of the chain corresponds to 1-7; that stretch reads MRRRHRC. Residues 8–28 form a helical; Signal-anchor for type II membrane protein membrane-spanning segment; it reads VALLFIFSAFITPLGFFYYTI. Over 29 to 669 the chain is Lumenal; it reads SNESKRYSEE…EQHAICKKCL (641 aa). N-linked (GlcNAc...) asparagine glycosylation is found at Asn-30, Asn-412, Asn-437, and Asn-626.

Belongs to the glycosyltransferase 18 family. In terms of tissue distribution, expressed in a complex subset of neurons in larvae and in the spermathecal and pharyngeal-intestinal valves and certain vulval cells of adults.

It localises to the golgi apparatus membrane. The enzyme catalyses N(4)-{beta-D-GlcNAc-(1-&gt;2)-[beta-D-GlcNAc-(1-&gt;4)]-alpha-D-Man-(1-&gt;3)-[beta-D-GlcNAc-(1-&gt;2)-alpha-D-Man-(1-&gt;6)]-beta-D-Man-(1-&gt;4)-beta-D-GlcNAc-(1-&gt;4)-beta-D-GlcNAc}-L-asparaginyl-[protein] + UDP-N-acetyl-alpha-D-glucosamine = N(4)-{beta-D-GlcNAc-(1-&gt;2)-[beta-D-GlcNAc-(1-&gt;4)]-alpha-D-Man-(1-&gt;3)-[beta-D-GlcNAc-(1-&gt;2)-[beta-D-GlcNAc-(1-&gt;6)]-alpha-D-Man-(1-&gt;6)]-beta-D-Man-(1-&gt;4)-beta-D-GlcNAc-(1-&gt;4)-beta-D-GlcNAc}-L-asparaginyl-[protein] + UDP + H(+). Its pathway is protein modification; protein glycosylation. Its function is as follows. Catalyzes the addition of N-acetylglucosamine (GlcNAc) in beta 1-6 linkage to the alpha-linked mannose of biantennary N-linked oligosaccharides. The polypeptide is Alpha-1,6-mannosylglycoprotein 6-beta-N-acetylglucosaminyltransferase (gly-2) (Caenorhabditis elegans).